We begin with the raw amino-acid sequence, 321 residues long: Ferredoxin--NADP reductase (321 aa).

FAD contacts are provided by Asp-28, Gln-36, Tyr-41, Ala-81, Phe-115, Asp-274, and Ser-315.

This sequence belongs to the ferredoxin--NADP reductase type 2 family. In terms of assembly, homodimer. FAD serves as cofactor.

The catalysed reaction is 2 reduced [2Fe-2S]-[ferredoxin] + NADP(+) + H(+) = 2 oxidized [2Fe-2S]-[ferredoxin] + NADPH. The protein is Ferredoxin--NADP reductase of Frankia casuarinae (strain DSM 45818 / CECT 9043 / HFP020203 / CcI3).